A 516-amino-acid polypeptide reads, in one-letter code: Lysophosphatidylcholine acyltransferase 2B (516 aa).

Residue asparagine 28 is glycosylated (N-linked (GlcNAc...) asparagine). 3 consecutive transmembrane segments (helical) span residues 44 to 64, 68 to 88, and 102 to 122; these read THLSAWRWACTIILGTVLVPV, CIVFLLILLWPVAVLSAINLP, and LIKSALVFLFRLGFFFAGFLV. Residues 142–147 carry the HXXXXD motif motif; sequence HSTFFD. EF-hand domains are found at residues 387 to 422 and 424 to 459; these read PISEPLRQLFSLFDRNQDGTIDFREYVIGLTVLCNP and NTEKILQMSFKLFDLDEDGYVTERELTTMLQAAFGV. Residues aspartate 400, asparagine 402, aspartate 404, threonine 406, glutamate 411, aspartate 437, aspartate 439, aspartate 441, tyrosine 443, and glutamate 448 each coordinate Ca(2+).

It belongs to the 1-acyl-sn-glycerol-3-phosphate acyltransferase family.

It is found in the membrane. The protein operates within lipid metabolism; phospholipid metabolism. Functionally, probable acetyltransferase. The polypeptide is Lysophosphatidylcholine acyltransferase 2B (Lpcat2b) (Mus musculus (Mouse)).